Here is a 315-residue protein sequence, read N- to C-terminus: Neuroguidin (315 aa).

2 disordered regions span residues Ser-127–Arg-201 and Val-289–Lys-315. Basic and acidic residues-rich tracts occupy residues Lys-159–Gly-168 and Tyr-182–Lys-200. Residues His-181–Ser-206 are a coiled coil. Basic residues predominate over residues Lys-296–Lys-315.

Belongs to the SAS10 family. As to quaternary structure, part of the small subunit (SSU) processome, composed of more than 70 proteins and the RNA chaperone small nucleolar RNA (snoRNA) U3.

Its subcellular location is the nucleus. The protein resides in the nucleolus. It is found in the chromosome. It localises to the centromere. The protein localises to the cytoplasm. Its subcellular location is the cell projection. The protein resides in the axon. It is found in the dendrite. It localises to the filopodium. Functionally, part of the small subunit (SSU) processome, first precursor of the small eukaryotic ribosomal subunit. During the assembly of the SSU processome in the nucleolus, many ribosome biogenesis factors, an RNA chaperone and ribosomal proteins associate with the nascent pre-rRNA and work in concert to generate RNA folding, modifications, rearrangements and cleavage as well as targeted degradation of pre-ribosomal RNA by the RNA exosome. Its dissociation from the complex determines the transition from state pre-A1 to state pre-A1*. May inhibit mRNA translation. In Danio rerio (Zebrafish), this protein is Neuroguidin (ngdn).